The sequence spans 921 residues: Leucine--tRNA ligase (921 aa).

The 'HIGH' region motif lies at 41 to 52 (PYPSGSGLHVGH). The short motif at 695–699 (KMSKS) is the 'KMSKS' region element. Lys698 serves as a coordination point for ATP.

It belongs to the class-I aminoacyl-tRNA synthetase family.

It is found in the cytoplasm. The enzyme catalyses tRNA(Leu) + L-leucine + ATP = L-leucyl-tRNA(Leu) + AMP + diphosphate. This is Leucine--tRNA ligase from Cytophaga hutchinsonii (strain ATCC 33406 / DSM 1761 / CIP 103989 / NBRC 15051 / NCIMB 9469 / D465).